The chain runs to 224 residues: LexA repressor (224 aa).

Residues 31-51 (RAEIAAELGFKSANAAEEHLQ) constitute a DNA-binding region (H-T-H motif). Active-site for autocatalytic cleavage activity residues include S142 and K179.

Belongs to the peptidase S24 family. As to quaternary structure, homodimer.

The enzyme catalyses Hydrolysis of Ala-|-Gly bond in repressor LexA.. Represses a number of genes involved in the response to DNA damage (SOS response), including recA and lexA. In the presence of single-stranded DNA, RecA interacts with LexA causing an autocatalytic cleavage which disrupts the DNA-binding part of LexA, leading to derepression of the SOS regulon and eventually DNA repair. The protein is LexA repressor of Acidovorax ebreus (strain TPSY) (Diaphorobacter sp. (strain TPSY)).